Here is a 247-residue protein sequence, read N- to C-terminus: Triosephosphate isomerase (247 aa).

The substrate site is built by N10 and K12. Catalysis depends on H94, which acts as the Electrophile. The Proton acceptor role is filled by E164.

Belongs to the triosephosphate isomerase family. In terms of assembly, homodimer.

The protein localises to the cytoplasm. It catalyses the reaction D-glyceraldehyde 3-phosphate = dihydroxyacetone phosphate. The catalysed reaction is dihydroxyacetone phosphate = methylglyoxal + phosphate. Its pathway is carbohydrate biosynthesis; gluconeogenesis. It participates in carbohydrate degradation; glycolysis; D-glyceraldehyde 3-phosphate from glycerone phosphate: step 1/1. Its function is as follows. Triosephosphate isomerase is an extremely efficient metabolic enzyme that catalyzes the interconversion between dihydroxyacetone phosphate (DHAP) and D-glyceraldehyde-3-phosphate (G3P) in glycolysis and gluconeogenesis. Functionally, it is also responsible for the non-negligible production of methylglyoxal a reactive cytotoxic side-product that modifies and can alter proteins, DNA and lipids. The sequence is that of Triosephosphate isomerase from Latimeria chalumnae (Coelacanth).